A 325-amino-acid polypeptide reads, in one-letter code: Glutarate 2-hydroxylase (325 aa).

Fe cation-binding residues include H160, D162, and H292.

Belongs to the glutarate hydroxylase family. In terms of assembly, homotetramer. It depends on Fe(2+) as a cofactor.

The catalysed reaction is glutarate + 2-oxoglutarate + O2 = (S)-2-hydroxyglutarate + succinate + CO2. Its pathway is amino-acid degradation. In terms of biological role, acts as an alpha-ketoglutarate-dependent dioxygenase catalyzing hydroxylation of glutarate (GA) to L-2-hydroxyglutarate (L2HG). Functions in a L-lysine degradation pathway that proceeds via cadaverine, glutarate and L-2-hydroxyglutarate. The protein is Glutarate 2-hydroxylase of Pseudomonas putida (strain GB-1).